Consider the following 495-residue polypeptide: NADH-ubiquinone oxidoreductase chain 4 (495 aa).

A run of 11 helical transmembrane segments spans residues 9 to 29 (YSNL…PLFI), 39 to 59 (LIGL…RIQF), 89 to 109 (ISLF…SVGW), 139 to 159 (LLLF…IIGV), 173 to 193 (FFLY…LILF), 214 to 234 (IFLW…VPVH), 272 to 292 (FPEA…IAII), 313 to 333 (VAHM…GIGG), 335 to 355 (ILPM…VGVL), 367 to 387 (YGGL…FTLA), and 413 to 433 (LVAT…LWLY).

It belongs to the complex I subunit 4 family.

The protein localises to the mitochondrion membrane. The enzyme catalyses a ubiquinone + NADH + 5 H(+)(in) = a ubiquinol + NAD(+) + 4 H(+)(out). Functionally, core subunit of the mitochondrial membrane respiratory chain NADH dehydrogenase (Complex I) that is believed to belong to the minimal assembly required for catalysis. Complex I functions in the transfer of electrons from NADH to the respiratory chain. The immediate electron acceptor for the enzyme is believed to be ubiquinone. This Brassica campestris (Field mustard) protein is NADH-ubiquinone oxidoreductase chain 4 (ND4).